The following is a 938-amino-acid chain: MDSAFFNEVAKKWQEKWENNKVFEANPSNSEKYFITVAFPYTNSPLHIGHGRTYITADIVARYQRMIGKNVLFPFAFQFTGTPILSISESIKRGDSDIISDFINLYKISPEKVREFEDPLKLAEYFKEDMKRMAKALGLSVDWRREFTTIDPRFGQFIKWQFRKLKEKGFITTATDAVGYCPNDNFPVGMHDTKGDVEPEVQEMDVIEFEGNDVVFPTATSRPETVFGANAVLINPEATYVLIRGSNWVLSKEAFRKLSYQRELVPEREVQGKDLIGLTVKNPISGKDVKVYGSKFVDAKMGTGSVMAVPAHEPLHYLGLSEVLSEVEVIPVISTEGYGDFPGPEVLALAGTKNPAELKDYIDTLYREEYYKGVMREDIVDLVPDYMRSIVKDRIAGKRVPEARRETVELLRSLGKHDLIYEISNGPIYCRCGAEIVVKVIRDQWYITYDNPLWKSWTMKALDRISIVPEEARRDMAKAIFSMKRRACSRSRGLGVKLPWDESQIIDSLSDSTIYTGFYTVAHKLSHDPSKLNDQFWDFVLLGNGDASEVSKVTGISVEELKDLRNEFSYWYPLDSRHSGRDLVQNHLPFLIYNHLAIFGESLLPRQIVINGFVRVGGKKMSKSFRNIYPLYKAVEEYGVDPVRLALTISSELLEDTDFDVNTVKAVTDQLRRMYDLAVNLSKLRENESTGLPEKWLLSIIHYKVKEVSDLMNSLDLRKAFNIILYEYYEILRDYLSMVSNPNTSVLRKAIEIWARLISPGAPHIAEEIWHIFNEGFVSLTRYPVPEELEVDGQAVIQLEYIRHLINQVKEISSMANKQPEKLIIYVSNSDELGILRAVLRGLKERKNLRELSSITGQREEYLRSLVERVQSLPPILRELIVTYPLDEFKTITDNLNFLVRRLDVDEIQVYRSDEANAPDIKGKKSNALPLLPGIVII.

The 'HIGH' region motif lies at 40 to 50 (PYTNSPLHIGH). The 'KMSKS' region motif lies at 620 to 624 (KMSKS). Residue K623 participates in ATP binding.

The protein belongs to the class-I aminoacyl-tRNA synthetase family.

Its subcellular location is the cytoplasm. It catalyses the reaction tRNA(Leu) + L-leucine + ATP = L-leucyl-tRNA(Leu) + AMP + diphosphate. This is Leucine--tRNA ligase 1 from Metallosphaera sedula (strain ATCC 51363 / DSM 5348 / JCM 9185 / NBRC 15509 / TH2).